The sequence spans 176 residues: NAD(P)H-quinone oxidoreductase subunit 6, chloroplastic (176 aa).

5 helical membrane-spanning segments follow: residues 10-30, 33-53, 60-80, 92-112, and 152-172; these read ILVLFGGFVLLLGGLGVVLLT, TFSAFSLGLVLVCISLFYILL, VAQLLIYVGAINVLIIFAVMF, FWTIGDGFTSLVCITIPFSLM, and FYLPFELISIILLVSLIGAIT.

This sequence belongs to the complex I subunit 6 family. As to quaternary structure, NDH is composed of at least 16 different subunits, 5 of which are encoded in the nucleus.

It localises to the plastid. It is found in the chloroplast thylakoid membrane. It catalyses the reaction a plastoquinone + NADH + (n+1) H(+)(in) = a plastoquinol + NAD(+) + n H(+)(out). It carries out the reaction a plastoquinone + NADPH + (n+1) H(+)(in) = a plastoquinol + NADP(+) + n H(+)(out). In terms of biological role, NDH shuttles electrons from NAD(P)H:plastoquinone, via FMN and iron-sulfur (Fe-S) centers, to quinones in the photosynthetic chain and possibly in a chloroplast respiratory chain. The immediate electron acceptor for the enzyme in this species is believed to be plastoquinone. Couples the redox reaction to proton translocation, and thus conserves the redox energy in a proton gradient. This is NAD(P)H-quinone oxidoreductase subunit 6, chloroplastic (ndhG) from Oryza nivara (Indian wild rice).